We begin with the raw amino-acid sequence, 117 residues long: Large ribosomal subunit protein bL19 (117 aa).

This sequence belongs to the bacterial ribosomal protein bL19 family.

This protein is located at the 30S-50S ribosomal subunit interface and may play a role in the structure and function of the aminoacyl-tRNA binding site. The chain is Large ribosomal subunit protein bL19 from Shewanella frigidimarina (strain NCIMB 400).